A 468-amino-acid polypeptide reads, in one-letter code: Arginine biosynthesis bifunctional protein ArgJ, mitochondrial (468 aa).

A mitochondrion-targeting transit peptide spans 1 to 23 (MVGFSRCALSQLRQPKAQLVRSF). Substrate-binding residues include T198, K227, T238, E324, N463, and T468. T238 functions as the Nucleophile in the catalytic mechanism.

This sequence belongs to the ArgJ family. As to quaternary structure, heterodimer of an alpha and a beta chain. Post-translationally, the alpha and beta chains are autoproteolytically processed from a single precursor protein within the mitochondrion.

The protein localises to the mitochondrion matrix. It catalyses the reaction N(2)-acetyl-L-ornithine + L-glutamate = N-acetyl-L-glutamate + L-ornithine. The catalysed reaction is L-glutamate + acetyl-CoA = N-acetyl-L-glutamate + CoA + H(+). Its pathway is amino-acid biosynthesis; L-arginine biosynthesis; L-ornithine and N-acetyl-L-glutamate from L-glutamate and N(2)-acetyl-L-ornithine (cyclic): step 1/1. It functions in the pathway amino-acid biosynthesis; L-arginine biosynthesis; N(2)-acetyl-L-ornithine from L-glutamate: step 1/4. Catalyzes two activities which are involved in the cyclic version of arginine biosynthesis: the synthesis of acetylglutamate from glutamate and acetyl-CoA, and of ornithine by transacetylation between acetylornithine and glutamate. In Podospora anserina (strain S / ATCC MYA-4624 / DSM 980 / FGSC 10383) (Pleurage anserina), this protein is Arginine biosynthesis bifunctional protein ArgJ, mitochondrial.